The chain runs to 489 residues: N-succinylglutamate 5-semialdehyde dehydrogenase (489 aa).

Residue 224-229 coordinates NAD(+); sequence GSAKVG. Active-site residues include Glu247 and Cys281.

It belongs to the aldehyde dehydrogenase family. AstD subfamily.

It carries out the reaction N-succinyl-L-glutamate 5-semialdehyde + NAD(+) + H2O = N-succinyl-L-glutamate + NADH + 2 H(+). It participates in amino-acid degradation; L-arginine degradation via AST pathway; L-glutamate and succinate from L-arginine: step 4/5. In terms of biological role, catalyzes the NAD-dependent reduction of succinylglutamate semialdehyde into succinylglutamate. In Chromohalobacter salexigens (strain ATCC BAA-138 / DSM 3043 / CIP 106854 / NCIMB 13768 / 1H11), this protein is N-succinylglutamate 5-semialdehyde dehydrogenase.